The sequence spans 100 residues: Aspartyl/glutamyl-tRNA(Asn/Gln) amidotransferase subunit C (100 aa).

Belongs to the GatC family. As to quaternary structure, heterotrimer of A, B and C subunits.

It carries out the reaction L-glutamyl-tRNA(Gln) + L-glutamine + ATP + H2O = L-glutaminyl-tRNA(Gln) + L-glutamate + ADP + phosphate + H(+). The catalysed reaction is L-aspartyl-tRNA(Asn) + L-glutamine + ATP + H2O = L-asparaginyl-tRNA(Asn) + L-glutamate + ADP + phosphate + 2 H(+). Its function is as follows. Allows the formation of correctly charged Asn-tRNA(Asn) or Gln-tRNA(Gln) through the transamidation of misacylated Asp-tRNA(Asn) or Glu-tRNA(Gln) in organisms which lack either or both of asparaginyl-tRNA or glutaminyl-tRNA synthetases. The reaction takes place in the presence of glutamine and ATP through an activated phospho-Asp-tRNA(Asn) or phospho-Glu-tRNA(Gln). This Staphylococcus aureus (strain Newman) protein is Aspartyl/glutamyl-tRNA(Asn/Gln) amidotransferase subunit C.